We begin with the raw amino-acid sequence, 313 residues long: Jacalin-related lectin 8 (313 aa).

Positions 1-23 (MFIIYLFIFLSSAIIDSNGVAMA) are cleaved as a signal peptide. Jacalin-type lectin domains lie at 24–163 (QKIE…YVKT) and 165–309 (PTKS…YFSP).

This sequence belongs to the jacalin lectin family.

The protein is Jacalin-related lectin 8 (JAL8) of Arabidopsis thaliana (Mouse-ear cress).